Consider the following 217-residue polypeptide: Protein GrpE (217 aa).

Positions 1-63 (MAETSNSENK…AADSELSLQS (63 aa)) are disordered. Residues 10–32 (KTSEEAKASEKNSRSITLEETKL) are compositionally biased toward basic and acidic residues. The segment covering 37–63 (SEESTQTTESTQAQAAEAADSELSLQS) has biased composition (low complexity).

This sequence belongs to the GrpE family. In terms of assembly, homodimer.

The protein resides in the cytoplasm. Participates actively in the response to hyperosmotic and heat shock by preventing the aggregation of stress-denatured proteins, in association with DnaK and GrpE. It is the nucleotide exchange factor for DnaK and may function as a thermosensor. Unfolded proteins bind initially to DnaJ; upon interaction with the DnaJ-bound protein, DnaK hydrolyzes its bound ATP, resulting in the formation of a stable complex. GrpE releases ADP from DnaK; ATP binding to DnaK triggers the release of the substrate protein, thus completing the reaction cycle. Several rounds of ATP-dependent interactions between DnaJ, DnaK and GrpE are required for fully efficient folding. The protein is Protein GrpE of Leptospira borgpetersenii serovar Hardjo-bovis (strain JB197).